Here is a 142-residue protein sequence, read N- to C-terminus: MVLSPDDKKHVKAAWGKVGEHAGEYGAEALERMFLSFPTTKTYFPHFDLSHGSDQVNKHGKKVADALTLAVGHVDDMPQALSKLSDLHAHKLRVDPVNFKLLSHCLLVTLAAHLPAEFTPAVHASLDKFLASVSTVLTSKYR.

Residues 2–142 (VLSPDDKKHV…VSTVLTSKYR (141 aa)) form the Globin domain. At S4 the chain carries Phosphoserine. N6-succinyllysine occurs at positions 8 and 12. Position 17 is an N6-acetyllysine; alternate (K17). K17 is subject to N6-succinyllysine; alternate. Y25 is subject to Phosphotyrosine. S36 is modified (phosphoserine). N6-succinyllysine is present on K41. Position 50 is a phosphoserine (S50). Position 59 (H59) interacts with O2. H88 contacts heme b. Position 103 is a phosphoserine (S103). Residue T109 is modified to Phosphothreonine. Residues S125 and S132 each carry the phosphoserine modification. T135 and T138 each carry phosphothreonine. S139 is modified (phosphoserine).

It belongs to the globin family. As to quaternary structure, heterotetramer of two alpha chains and two beta chains. Red blood cells.

Functionally, involved in oxygen transport from the lung to the various peripheral tissues. In terms of biological role, hemopressin acts as an antagonist peptide of the cannabinoid receptor CNR1. Hemopressin-binding efficiently blocks cannabinoid receptor CNR1 and subsequent signaling. This chain is Hemoglobin subunit alpha (HBA), found in Papio anubis (Olive baboon).